Consider the following 876-residue polypeptide: Leucine--tRNA ligase (876 aa).

The 'HIGH' region signature appears at 43–53 (PYPSGRIHIGH). Positions 632–636 (KMSKS) match the 'KMSKS' region motif. K635 is an ATP binding site.

The protein belongs to the class-I aminoacyl-tRNA synthetase family.

It is found in the cytoplasm. It carries out the reaction tRNA(Leu) + L-leucine + ATP = L-leucyl-tRNA(Leu) + AMP + diphosphate. In Allorhizobium ampelinum (strain ATCC BAA-846 / DSM 112012 / S4) (Agrobacterium vitis (strain S4)), this protein is Leucine--tRNA ligase.